A 155-amino-acid polypeptide reads, in one-letter code: SsrA-binding protein (155 aa).

Belongs to the SmpB family.

It is found in the cytoplasm. In terms of biological role, required for rescue of stalled ribosomes mediated by trans-translation. Binds to transfer-messenger RNA (tmRNA), required for stable association of tmRNA with ribosomes. tmRNA and SmpB together mimic tRNA shape, replacing the anticodon stem-loop with SmpB. tmRNA is encoded by the ssrA gene; the 2 termini fold to resemble tRNA(Ala) and it encodes a 'tag peptide', a short internal open reading frame. During trans-translation Ala-aminoacylated tmRNA acts like a tRNA, entering the A-site of stalled ribosomes, displacing the stalled mRNA. The ribosome then switches to translate the ORF on the tmRNA; the nascent peptide is terminated with the 'tag peptide' encoded by the tmRNA and targeted for degradation. The ribosome is freed to recommence translation, which seems to be the essential function of trans-translation. The chain is SsrA-binding protein from Moorella thermoacetica (strain ATCC 39073 / JCM 9320).